We begin with the raw amino-acid sequence, 317 residues long: Glucose-6-phosphate isomerase, cytosolic 2B (317 aa).

The active-site Proton donor is Glu-108. Active-site residues include His-139 and Lys-264.

Belongs to the GPI family. As to quaternary structure, homodimer.

It is found in the cytoplasm. It catalyses the reaction alpha-D-glucose 6-phosphate = beta-D-fructose 6-phosphate. The protein operates within carbohydrate degradation; glycolysis; D-glyceraldehyde 3-phosphate and glycerone phosphate from D-glucose: step 2/4. The protein is Glucose-6-phosphate isomerase, cytosolic 2B (PGIC2-B) of Clarkia lewisii (Farewell-to-spring).